The primary structure comprises 284 residues: Ubiquitin thioesterase otubain-like (284 aa).

An OTU domain is found at 77-274 (GEIRYIRGDG…PGHYDVIYKK (198 aa)). D85 is an active-site residue. C88 functions as the Nucleophile in the catalytic mechanism. A substrate-binding site is contributed by I176. Residues H245 and H267 contribute to the active site.

This sequence belongs to the peptidase C65 family.

It carries out the reaction Thiol-dependent hydrolysis of ester, thioester, amide, peptide and isopeptide bonds formed by the C-terminal Gly of ubiquitin (a 76-residue protein attached to proteins as an intracellular targeting signal).. Functionally, hydrolase that can remove conjugated ubiquitin from proteins and plays an important regulatory role at the level of protein turnover by preventing degradation. Specifically cleaves 'Lys-48'-linked polyubiquitin. In Caenorhabditis elegans, this protein is Ubiquitin thioesterase otubain-like (otub-1).